Consider the following 423-residue polypeptide: MNILQNLKKSDPVISNFINSEKNRQETHLELIASENFASIAVMQAQGSVLTNKYAEGLPQKRYYGGCEFVDEIEELAIQRAKKLFNANWANVQPHSGAQANAAVFLSLLQPGDTIMGMDLSHGGHLTHGSPVNMSGKWFNAVHYGVNKETSELNFDEIREIALETKPKLIICGYSAYPRTIDFESFRNIADEVGAFLMADIAHIAGLVASKLHPNPLPYCDVVTTTTHKTLRGPRGGLILCKDGEFGKKFDKSVFPGTQGGPLEHIIAAKAVAFGEALQPDFVNYSQQVIKNAKVLASTLISRGIDIVSGGTDNHIVLLDLRSINMTGKIADLLVSAVNITANKNTVPFDPESPFVTSGLRLGTAALTTRGFNETAFAEVGEIIADRLLNPNDSVIESQCKDKVLALCNRFPLYEGKLEASIK.

(6S)-5,6,7,8-tetrahydrofolate is bound by residues Leu-120 and 124–126; that span reads GHL. Lys-229 carries the N6-(pyridoxal phosphate)lysine modification. Residues Glu-245 and 353–355 each bind (6S)-5,6,7,8-tetrahydrofolate; that span reads SPF.

It belongs to the SHMT family. In terms of assembly, homodimer. Pyridoxal 5'-phosphate is required as a cofactor.

It localises to the cytoplasm. It catalyses the reaction (6R)-5,10-methylene-5,6,7,8-tetrahydrofolate + glycine + H2O = (6S)-5,6,7,8-tetrahydrofolate + L-serine. It participates in one-carbon metabolism; tetrahydrofolate interconversion. Its pathway is amino-acid biosynthesis; glycine biosynthesis; glycine from L-serine: step 1/1. Functionally, catalyzes the reversible interconversion of serine and glycine with tetrahydrofolate (THF) serving as the one-carbon carrier. This reaction serves as the major source of one-carbon groups required for the biosynthesis of purines, thymidylate, methionine, and other important biomolecules. Also exhibits THF-independent aldolase activity toward beta-hydroxyamino acids, producing glycine and aldehydes, via a retro-aldol mechanism. The sequence is that of Serine hydroxymethyltransferase from Prochlorococcus marinus (strain MIT 9312).